The primary structure comprises 207 residues: Small ribosomal subunit protein uS4 (207 aa).

The interval 22-54 (KSARRSISDKSKFESKPGQHGRTSGSRTSDFGL) is disordered. The segment covering 27 to 38 (SISDKSKFESKP) has biased composition (basic and acidic residues). Over residues 42-52 (GRTSGSRTSDF) the composition is skewed to polar residues. An S4 RNA-binding domain is found at 97 to 157 (SRLDNVVYRM…EKSKKQLRII (61 aa)).

It belongs to the universal ribosomal protein uS4 family. In terms of assembly, part of the 30S ribosomal subunit. Contacts protein S5. The interaction surface between S4 and S5 is involved in control of translational fidelity.

In terms of biological role, one of the primary rRNA binding proteins, it binds directly to 16S rRNA where it nucleates assembly of the body of the 30S subunit. Functionally, with S5 and S12 plays an important role in translational accuracy. This Leptothrix cholodnii (strain ATCC 51168 / LMG 8142 / SP-6) (Leptothrix discophora (strain SP-6)) protein is Small ribosomal subunit protein uS4.